We begin with the raw amino-acid sequence, 254 residues long: 5'-methylthioadenosine/S-adenosylhomocysteine nucleosidase (254 aa).

Position 1 is an N-acetylmethionine (Met-1). Glu-25 (proton acceptor) is an active-site residue. S-methyl-5'-thioadenosine is bound by residues Thr-103 and 186-189; that span reads KDME. Residues Lys-186 and Asp-212 each coordinate adenine. Catalysis depends on Asp-212, which acts as the Proton donor.

It belongs to the PNP/UDP phosphorylase family. MtnN subfamily. In terms of assembly, homodimer.

It carries out the reaction S-methyl-5'-thioadenosine + H2O = 5-(methylsulfanyl)-D-ribose + adenine. The catalysed reaction is S-adenosyl-L-homocysteine + H2O = S-(5-deoxy-D-ribos-5-yl)-L-homocysteine + adenine. It catalyses the reaction 5'-deoxyadenosine + H2O = 5-deoxy-D-ribose + adenine. The protein operates within amino-acid biosynthesis; L-methionine biosynthesis via salvage pathway; S-methyl-5-thio-alpha-D-ribose 1-phosphate from S-methyl-5'-thioadenosine (hydrolase route): step 1/2. Its function is as follows. Enzyme of the methionine cycle that catalyzes the irreversible cleavage of the glycosidic bond in 5'-methylthioadenosine (MTA) and S-adenosylhomocysteine (SAH/AdoHcy) to a lesser extent, to adenine and the corresponding thioribose, 5'-methylthioribose and S-ribosylhomocysteine, respectively. Contributes to the maintenance of AdoMet homeostasis and is required to sustain high rates of ethylene synthesis. The protein is 5'-methylthioadenosine/S-adenosylhomocysteine nucleosidase (MTN2) of Arabidopsis thaliana (Mouse-ear cress).